The following is a 200-amino-acid chain: Probable nicotinate-nucleotide adenylyltransferase (200 aa).

This sequence belongs to the NadD family.

The enzyme catalyses nicotinate beta-D-ribonucleotide + ATP + H(+) = deamido-NAD(+) + diphosphate. Its pathway is cofactor biosynthesis; NAD(+) biosynthesis; deamido-NAD(+) from nicotinate D-ribonucleotide: step 1/1. Its function is as follows. Catalyzes the reversible adenylation of nicotinate mononucleotide (NaMN) to nicotinic acid adenine dinucleotide (NaAD). In Clostridium novyi (strain NT), this protein is Probable nicotinate-nucleotide adenylyltransferase.